The following is a 435-amino-acid chain: uncharacterized protein (435 aa).

Transmembrane regions (helical) follow at residues 14–34 (VSMA…GVGA), 44–64 (TFIL…KLGA), 84–104 (IITG…IALF), 123–143 (FNIA…NFFG), 153–173 (FIVL…LITI), 187–207 (VSGM…FGVI), 224–244 (AIFI…ISAI), 267–287 (FLGN…ISSA), 324–344 (LYIT…EGVA), 346–366 (ITSA…YILI), 375–395 (IVIF…YYQW), and 400–420 (FVFY…IIYR).

It localises to the cell membrane. This is an uncharacterized protein from Methanocaldococcus jannaschii (strain ATCC 43067 / DSM 2661 / JAL-1 / JCM 10045 / NBRC 100440) (Methanococcus jannaschii).